An 859-amino-acid chain; its full sequence is Leucine--tRNA ligase (859 aa).

Residues 42-52 carry the 'HIGH' region motif; the sequence is PYPSGRLHMGH. A 'KMSKS' region motif is present at residues 618-622; it reads KMSKS. Residue K621 participates in ATP binding.

Belongs to the class-I aminoacyl-tRNA synthetase family.

It localises to the cytoplasm. The catalysed reaction is tRNA(Leu) + L-leucine + ATP = L-leucyl-tRNA(Leu) + AMP + diphosphate. This is Leucine--tRNA ligase from Shewanella sp. (strain MR-4).